Reading from the N-terminus, the 523-residue chain is Inosine-5'-monophosphate dehydrogenase 2 (523 aa).

CBS domains follow at residues 121–183 (FINN…VQDV) and 184–240 (MTKN…PLAS). Residues 278–280 (DSS) and 328–330 (GMG) contribute to the NAD(+) site. Residues glycine 330 and glycine 332 each contribute to the K(+) site. An IMP-binding site is contributed by serine 333. Residue cysteine 335 participates in K(+) binding. Cysteine 335 functions as the Thioimidate intermediate in the catalytic mechanism. Residues 368-370 (DGG), 391-392 (GG), and 415-419 (YRGMG) contribute to the IMP site. Catalysis depends on arginine 437, which acts as the Proton acceptor. Position 449 (glutamine 449) interacts with IMP. Residues glutamate 508, glycine 509, and glycine 510 each contribute to the K(+) site.

Belongs to the IMPDH/GMPR family. As to quaternary structure, homotetramer. Seems to be able to form heterotetramers composed from more than 1 of the 3 IMPDH gene products (IMD2-4). The cofactor is K(+).

The protein localises to the cytoplasm. The catalysed reaction is IMP + NAD(+) + H2O = XMP + NADH + H(+). Its pathway is purine metabolism; XMP biosynthesis via de novo pathway; XMP from IMP: step 1/1. With respect to regulation, mycophenolic acid (MPA) is a non-competitive inhibitor that prevents formation of the closed enzyme conformation by binding to the same site as the amobile flap. In contrast, mizoribine monophosphate (MZP) is a competitive inhibitor that induces the closed conformation. MPA is a potent inhibitor of mammalian IMPDHs but a poor inhibitor of the bacterial enzymes. MZP is a more potent inhibitor of bacterial IMPDH. Catalyzes the conversion of inosine 5'-phosphate (IMP) to xanthosine 5'-phosphate (XMP), the first committed and rate-limiting step in the de novo synthesis of guanine nucleotides, and therefore plays an important role in the regulation of cell growth. In contrast to the other IMPDH alleles IMD3 and IMD4, the enzymatic activity of IMD2 seems to be intrinsically drug resistant. The sequence is that of Inosine-5'-monophosphate dehydrogenase 2 from Saccharomyces cerevisiae (strain ATCC 204508 / S288c) (Baker's yeast).